Here is a 106-residue protein sequence, read N- to C-terminus: ATP-dependent Clp protease adapter protein ClpS (106 aa).

Residues 1 to 20 (MKVDMSTSVKDDAQLEASRV) form a disordered region.

This sequence belongs to the ClpS family. In terms of assembly, binds to the N-terminal domain of the chaperone ClpA.

Its function is as follows. Involved in the modulation of the specificity of the ClpAP-mediated ATP-dependent protein degradation. This chain is ATP-dependent Clp protease adapter protein ClpS, found in Chromobacterium violaceum (strain ATCC 12472 / DSM 30191 / JCM 1249 / CCUG 213 / NBRC 12614 / NCIMB 9131 / NCTC 9757 / MK).